A 136-amino-acid polypeptide reads, in one-letter code: Succinate dehydrogenase 2 membrane subunit SdhC (136 aa).

3 helical membrane-spanning segments follow: residues 32-52, 70-90, and 109-129; these read RISGATIFFFLFVHVLDAAML, IVGLMEYGLVAAVLFHALNGI, and LWIIGSVFLLLMVPAGVVVGI. Heme is bound at residue H85.

This sequence belongs to the cytochrome b560 family. As to quaternary structure, part of an enzyme complex containing four subunits: a flavoprotein (SdhA), an iron-sulfur protein (SdhB), plus two membrane-anchoring proteins (SdhC and SdhD). It depends on heme as a cofactor.

The protein localises to the cell membrane. In terms of biological role, membrane-anchoring subunit of succinate dehydrogenase 2 (Sdh2). Sdh2 may catalyze the two-electron oxidation of succinate to fumarate with a corresponding reduction of quinone to quinol under low oxygen conditions, when the primary aerobic succinate dehydrogenase (Sdh1) is inhibited. Sdh2 seems to be the generator of the proton motive force (PMF) under hypoxia. The chain is Succinate dehydrogenase 2 membrane subunit SdhC from Mycobacterium tuberculosis (strain ATCC 25618 / H37Rv).